Consider the following 376-residue polypeptide: Queuine tRNA-ribosyltransferase (376 aa).

Residue Asp89 is the Proton acceptor of the active site. Substrate is bound by residues 89–93 (DSGGF), Asp143, Gln187, and Gly214. Positions 245 to 251 (GVGKPQD) are RNA binding. Residue Asp264 is the Nucleophile of the active site. Positions 269-273 (TRNAR) are RNA binding; important for wobble base 34 recognition. Cys302, Cys304, Cys307, and His333 together coordinate Zn(2+).

Belongs to the queuine tRNA-ribosyltransferase family. Homodimer. Within each dimer, one monomer is responsible for RNA recognition and catalysis, while the other monomer binds to the replacement base PreQ1. It depends on Zn(2+) as a cofactor.

It catalyses the reaction 7-aminomethyl-7-carbaguanine + guanosine(34) in tRNA = 7-aminomethyl-7-carbaguanosine(34) in tRNA + guanine. It functions in the pathway tRNA modification; tRNA-queuosine biosynthesis. In terms of biological role, catalyzes the base-exchange of a guanine (G) residue with the queuine precursor 7-aminomethyl-7-deazaguanine (PreQ1) at position 34 (anticodon wobble position) in tRNAs with GU(N) anticodons (tRNA-Asp, -Asn, -His and -Tyr). Catalysis occurs through a double-displacement mechanism. The nucleophile active site attacks the C1' of nucleotide 34 to detach the guanine base from the RNA, forming a covalent enzyme-RNA intermediate. The proton acceptor active site deprotonates the incoming PreQ1, allowing a nucleophilic attack on the C1' of the ribose to form the product. After dissociation, two additional enzymatic reactions on the tRNA convert PreQ1 to queuine (Q), resulting in the hypermodified nucleoside queuosine (7-(((4,5-cis-dihydroxy-2-cyclopenten-1-yl)amino)methyl)-7-deazaguanosine). The sequence is that of Queuine tRNA-ribosyltransferase from Erwinia tasmaniensis (strain DSM 17950 / CFBP 7177 / CIP 109463 / NCPPB 4357 / Et1/99).